The chain runs to 103 residues: Preprofallaxidin-6 (103 aa).

An N-terminal signal peptide occupies residues 1–22 (MASLKKSLFLVLFLGFVSLSIC). The propeptide occupies 23-49 (EEEKRENEGNENEEEDENHEEGSEEKR). Positions 24–50 (EEKRENEGNENEEEDENHEEGSEEKRG) are disordered. Over residues 31 to 41 (GNENEEEDENH) the composition is skewed to acidic residues. The residue at position 65 (Leu-65) is a Leucine amide. The tract at residues 67–103 (KRSEEKRYHPFGKRSEEKRYHPFGKRSEEKRYPPIGK) is disordered. The propeptide occupies 69–73 (SEEKR). Phe-77 is modified (phenylalanine amide). The propeptide occupies 81–85 (SEEKR). Phenylalanine amide is present on Phe-89. A propeptide spanning residues 93–97 (SEEKR) is cleaved from the precursor. Position 101 is an isoleucine amide (Ile-101).

Belongs to the frog skin active peptide (FSAP) family. Brevinin subfamily. Expressed by the skin glands.

The protein localises to the secreted. Fallaxidin-1.3 shows no antibacterial activity against Gram-positive or Gram-negative bacteria. Does not inhibit the formation of NO by neuronal nitric oxide synthase. Has no effect on splenocyte proliferation or smooth muscle contraction. Functionally, fallaxidin-1.4 shows no antibacterial activity against Gram-positive or Gram-negative bacteria. Does not inhibit the formation of NO by neuronal nitric oxide synthase. Has no effect on splenocyte proliferation or smooth muscle contraction. Its function is as follows. Fallaxidin-3.1 shows antibacterial activity against the Gram-positive bacteria E.faecalis (MIC=100 uM) and L.lactis (MIC=100 uM). No antibacterial activity against the Gram-positive bacteria B.cereus, L.innocua, M.luteus, S.epidermidis, S.uberis and S.aureus, or the Gram-negative bacteria E.cloacae and E.coli. This chain is Preprofallaxidin-6, found in Litoria fallax (Eastern dwarf tree frog).